Here is a 377-residue protein sequence, read N- to C-terminus: Cell division protein FtsZ (377 aa).

The segment covering 1-16 has biased composition (acidic residues); sequence MDSIVDDAIDEAEDMG. The disordered stretch occupies residues 1–33; it reads MDSIVDDAIDEAEDMGDGSAEVGGPTDINRSGT. GTP contacts are provided by residues 57-61, 144-146, E175, R179, and D222; these read GAGGN and GTG.

It belongs to the FtsZ family. In terms of assembly, homodimer. Polymerizes to form a dynamic ring structure in a strictly GTP-dependent manner. Interacts directly with several other division proteins.

The protein localises to the cytoplasm. Functionally, essential cell division protein that forms a contractile ring structure (Z ring) at the future cell division site. The regulation of the ring assembly controls the timing and the location of cell division. One of the functions of the FtsZ ring is to recruit other cell division proteins to the septum to produce a new cell wall between the dividing cells. Binds GTP and shows GTPase activity. The polypeptide is Cell division protein FtsZ (Haloferax mediterranei (strain ATCC 33500 / DSM 1411 / JCM 8866 / NBRC 14739 / NCIMB 2177 / R-4) (Halobacterium mediterranei)).